We begin with the raw amino-acid sequence, 117 residues long: Immunoglobulin kappa variable 1-17 (117 aa).

Residues 1–22 form the signal peptide; that stretch reads MDMRVPAQLLGLLLLWFPGARC. The framework-1 stretch occupies residues 23 to 45; it reads DIQMTQSPSSLSASVGDRVTITC. The Ig-like domain maps to 24-117; it reads IQMTQSPSSL…YYCLQHNSYP (94 aa). Cysteines 45 and 110 form a disulfide. Residues 46 to 56 are complementarity-determining-1; the sequence is RASQGIRNDLG. Residues 57–71 form a framework-2 region; it reads WYQQKPGKAPKRLIY. The tract at residues 72-78 is complementarity-determining-2; sequence AASSLQS. The tract at residues 79–110 is framework-3; that stretch reads GVPSRFSGSGSGTEFTLTISSLQPEDFATYYC. The interval 111–117 is complementarity-determining-3; sequence LQHNSYP.

As to quaternary structure, immunoglobulins are composed of two identical heavy chains and two identical light chains; disulfide-linked.

Its subcellular location is the secreted. It localises to the cell membrane. Its function is as follows. V region of the variable domain of immunoglobulin light chains that participates in the antigen recognition. Immunoglobulins, also known as antibodies, are membrane-bound or secreted glycoproteins produced by B lymphocytes. In the recognition phase of humoral immunity, the membrane-bound immunoglobulins serve as receptors which, upon binding of a specific antigen, trigger the clonal expansion and differentiation of B lymphocytes into immunoglobulins-secreting plasma cells. Secreted immunoglobulins mediate the effector phase of humoral immunity, which results in the elimination of bound antigens. The antigen binding site is formed by the variable domain of one heavy chain, together with that of its associated light chain. Thus, each immunoglobulin has two antigen binding sites with remarkable affinity for a particular antigen. The variable domains are assembled by a process called V-(D)-J rearrangement and can then be subjected to somatic hypermutations which, after exposure to antigen and selection, allow affinity maturation for a particular antigen. The chain is Immunoglobulin kappa variable 1-17 from Homo sapiens (Human).